The primary structure comprises 134 residues: ATP synthase epsilon chain (134 aa).

The protein belongs to the ATPase epsilon chain family. In terms of assembly, F-type ATPases have 2 components, CF(1) - the catalytic core - and CF(0) - the membrane proton channel. CF(1) has five subunits: alpha(3), beta(3), gamma(1), delta(1), epsilon(1). CF(0) has three main subunits: a, b and c.

The protein localises to the cellular thylakoid membrane. Produces ATP from ADP in the presence of a proton gradient across the membrane. The polypeptide is ATP synthase epsilon chain (Prochlorococcus marinus (strain AS9601)).